The sequence spans 198 residues: Golgi to ER traffic protein 1 (198 aa).

Topologically, residues 1–6 are lumenal; it reads MDPFSI. Residues 7 to 26 form a helical membrane-spanning segment; that stretch reads LLTLTLIILAQNAVRIVGKS. Over 27 to 110 the chain is Cytoplasmic; sequence QIHQSIWNLY…AIEKYLGLAI (84 aa). Residues 73–106 are a coiled coil; that stretch reads KWTKLNRKYDQLQTEIKAVSDQVSQQQQAIEKYL. A helical transmembrane segment spans residues 111–131; it reads SVTTTLPLWLFRFKYRKQPLF. Residues 132-155 lie on the Lumenal side of the membrane; it reads YFPKDTFPSYLEWILSFPSVPQGS. Residues 156 to 172 traverse the membrane as a helical segment; that stretch reads IGIMFWILLLNKFVSNL. Residues 173 to 198 lie on the Cytoplasmic side of the membrane; it reads EFIVKTFSTKVEKPVPIVKVEDLSPK.

The protein belongs to the WRB/GET1 family. In terms of assembly, component of the Golgi to ER traffic (GET) complex, which is composed of GET1, GET2 and GET3. Within the complex, GET1 and GET2 form a heterotetramer which is stabilized by phosphatidylinositol binding and which binds to the GET3 homodimer.

It localises to the endoplasmic reticulum membrane. Its subcellular location is the golgi apparatus membrane. In terms of biological role, required for the post-translational delivery of tail-anchored (TA) proteins to the endoplasmic reticulum. Together with GET2, acts as a membrane receptor for soluble GET3, which recognizes and selectively binds the transmembrane domain of TA proteins in the cytosol. The GET complex cooperates with the HDEL receptor ERD2 to mediate the ATP-dependent retrieval of resident ER proteins that contain a C-terminal H-D-E-L retention signal from the Golgi to the ER. The sequence is that of Golgi to ER traffic protein 1 from Komagataella phaffii (strain GS115 / ATCC 20864) (Yeast).